A 338-amino-acid polypeptide reads, in one-letter code: DNA-directed RNA polymerase subunit alpha (338 aa).

Residues 1–234 (MIQKNWQELI…DQLNVFVNFE (234 aa)) are alpha N-terminal domain (alpha-NTD). An alpha C-terminal domain (alpha-CTD) region spans residues 250-338 (FNPALLKKVD…ELAKRFEEHY (89 aa)).

Belongs to the RNA polymerase alpha chain family. As to quaternary structure, homodimer. The RNAP catalytic core consists of 2 alpha, 1 beta, 1 beta' and 1 omega subunit. When a sigma factor is associated with the core the holoenzyme is formed, which can initiate transcription.

The catalysed reaction is RNA(n) + a ribonucleoside 5'-triphosphate = RNA(n+1) + diphosphate. Its function is as follows. DNA-dependent RNA polymerase catalyzes the transcription of DNA into RNA using the four ribonucleoside triphosphates as substrates. The polypeptide is DNA-directed RNA polymerase subunit alpha (Beijerinckia indica subsp. indica (strain ATCC 9039 / DSM 1715 / NCIMB 8712)).